The primary structure comprises 165 residues: Cyclic pyranopterin monophosphate synthase (165 aa).

Substrate-binding positions include 76–78 and 114–115; these read LCH and ME. D129 is a catalytic residue.

The protein belongs to the MoaC family. In terms of assembly, homohexamer; trimer of dimers.

It carries out the reaction (8S)-3',8-cyclo-7,8-dihydroguanosine 5'-triphosphate = cyclic pyranopterin phosphate + diphosphate. Its pathway is cofactor biosynthesis; molybdopterin biosynthesis. Its function is as follows. Catalyzes the conversion of (8S)-3',8-cyclo-7,8-dihydroguanosine 5'-triphosphate to cyclic pyranopterin monophosphate (cPMP). This is Cyclic pyranopterin monophosphate synthase from Brucella melitensis biotype 2 (strain ATCC 23457).